The sequence spans 92 residues: C-C motif chemokine 4 (92 aa).

Positions 1–23 are cleaved as a signal peptide; that stretch reads MKLCVSALSLLLLVAAFCAPGFS. 2 disulfides stabilise this stretch: Cys-34–Cys-58 and Cys-35–Cys-74.

This sequence belongs to the intercrine beta (chemokine CC) family. Homodimer.

The protein resides in the secreted. Its function is as follows. Monokine with inflammatory and chemokinetic properties. The chain is C-C motif chemokine 4 (Ccl4) from Mus musculus (Mouse).